We begin with the raw amino-acid sequence, 346 residues long: Uroporphyrinogen decarboxylase (346 aa).

Substrate contacts are provided by residues 21–25 (RQAGR), Phe-40, Asp-71, Tyr-146, Ser-201, and His-316.

Belongs to the uroporphyrinogen decarboxylase family. In terms of assembly, homodimer.

It localises to the cytoplasm. The catalysed reaction is uroporphyrinogen III + 4 H(+) = coproporphyrinogen III + 4 CO2. Its pathway is porphyrin-containing compound metabolism; protoporphyrin-IX biosynthesis; coproporphyrinogen-III from 5-aminolevulinate: step 4/4. Catalyzes the decarboxylation of four acetate groups of uroporphyrinogen-III to yield coproporphyrinogen-III. The polypeptide is Uroporphyrinogen decarboxylase (Rickettsia felis (strain ATCC VR-1525 / URRWXCal2) (Rickettsia azadi)).